A 212-amino-acid chain; its full sequence is Ribonuclease HII (212 aa).

Residues 18–212 form the RNase H type-2 domain; the sequence is GCVFGVDEAG…APVAQQELFR (195 aa). Residues Asp24, Glu25, and Asp118 each coordinate a divalent metal cation.

This sequence belongs to the RNase HII family. Mn(2+) is required as a cofactor. The cofactor is Mg(2+).

Its subcellular location is the cytoplasm. It catalyses the reaction Endonucleolytic cleavage to 5'-phosphomonoester.. In terms of biological role, endonuclease that specifically degrades the RNA of RNA-DNA hybrids. The sequence is that of Ribonuclease HII from Erythrobacter litoralis (strain HTCC2594).